A 589-amino-acid polypeptide reads, in one-letter code: Proline--tRNA ligase (589 aa).

The protein belongs to the class-II aminoacyl-tRNA synthetase family. ProS type 1 subfamily. In terms of assembly, homodimer.

It localises to the cytoplasm. The enzyme catalyses tRNA(Pro) + L-proline + ATP = L-prolyl-tRNA(Pro) + AMP + diphosphate. Functionally, catalyzes the attachment of proline to tRNA(Pro) in a two-step reaction: proline is first activated by ATP to form Pro-AMP and then transferred to the acceptor end of tRNA(Pro). As ProRS can inadvertently accommodate and process non-cognate amino acids such as alanine and cysteine, to avoid such errors it has two additional distinct editing activities against alanine. One activity is designated as 'pretransfer' editing and involves the tRNA(Pro)-independent hydrolysis of activated Ala-AMP. The other activity is designated 'posttransfer' editing and involves deacylation of mischarged Ala-tRNA(Pro). The misacylated Cys-tRNA(Pro) is not edited by ProRS. The chain is Proline--tRNA ligase from Gloeobacter violaceus (strain ATCC 29082 / PCC 7421).